We begin with the raw amino-acid sequence, 486 residues long: ATP synthase subunit beta (486 aa).

Gly-164–Thr-171 is an ATP binding site.

It belongs to the ATPase alpha/beta chains family. In terms of assembly, F-type ATPases have 2 components, CF(1) - the catalytic core - and CF(0) - the membrane proton channel. CF(1) has five subunits: alpha(3), beta(3), gamma(1), delta(1), epsilon(1). CF(0) has four main subunits: a(1), b(1), b'(1) and c(9-12).

It is found in the cellular thylakoid membrane. It catalyses the reaction ATP + H2O + 4 H(+)(in) = ADP + phosphate + 5 H(+)(out). Its function is as follows. Produces ATP from ADP in the presence of a proton gradient across the membrane. The catalytic sites are hosted primarily by the beta subunits. This is ATP synthase subunit beta from Prochlorococcus marinus (strain MIT 9215).